We begin with the raw amino-acid sequence, 103 residues long: N(4)-acetylcytidine amidohydrolase (103 aa).

The 95-residue stretch at 6–100 (ITFFQRFQDD…GESQFYVIEF (95 aa)) folds into the ASCH domain. The Proton acceptor role is filled by Lys21. Thr24 acts as the Nucleophile in catalysis. The active-site Proton donor is Glu74.

This sequence belongs to the N(4)-acetylcytidine amidohydrolase family.

It catalyses the reaction N(4)-acetylcytidine + H2O = cytidine + acetate + H(+). The enzyme catalyses N(4)-acetyl-2'-deoxycytidine + H2O = 2'-deoxycytidine + acetate + H(+). The catalysed reaction is N(4)-acetylcytosine + H2O = cytosine + acetate + H(+). Its function is as follows. Catalyzes the hydrolysis of N(4)-acetylcytidine (ac4C). The polypeptide is N(4)-acetylcytidine amidohydrolase (Klebsiella pneumoniae subsp. pneumoniae (strain ATCC 700721 / MGH 78578)).